The chain runs to 466 residues: Cysteine--tRNA ligase (466 aa).

Cysteine 29 is a binding site for Zn(2+). The 'HIGH' region signature appears at 31–41 (PTVYNYIHIGN). Zn(2+) contacts are provided by cysteine 209, histidine 234, and glutamate 238. The 'KMSKS' region signature appears at 266-270 (KMSKS). Lysine 269 serves as a coordination point for ATP. The residue at position 270 (serine 270) is a Phosphoserine.

Belongs to the class-I aminoacyl-tRNA synthetase family. As to quaternary structure, monomer. Zn(2+) is required as a cofactor.

Its subcellular location is the cytoplasm. It catalyses the reaction tRNA(Cys) + L-cysteine + ATP = L-cysteinyl-tRNA(Cys) + AMP + diphosphate. The chain is Cysteine--tRNA ligase from Bacillus velezensis (strain DSM 23117 / BGSC 10A6 / LMG 26770 / FZB42) (Bacillus amyloliquefaciens subsp. plantarum).